Here is an 85-residue protein sequence, read N- to C-terminus: MAHKKGQGSTQNNRDSIGRRLGVKKFGGEFVRAGNIIIRQRGTATHPGNNVGIGRDHTIFALVDGFVKFERKDKDRKKVSVYPAA.

This sequence belongs to the bacterial ribosomal protein bL27 family.

This is Large ribosomal subunit protein bL27 from Campylobacter fetus subsp. fetus (strain 82-40).